A 90-amino-acid chain; its full sequence is uncharacterized protein (90 aa).

The protein resides in the mitochondrion. This is an uncharacterized protein from Ascobolus immersus.